A 116-amino-acid chain; its full sequence is NADPH-dependent 7-cyano-7-deazaguanine reductase (116 aa).

Cys-31 (thioimide intermediate) is an active-site residue. The active-site Proton donor is Asp-38. Substrate contacts are provided by residues 53 to 55 (VEL) and 72 to 73 (YE).

This sequence belongs to the GTP cyclohydrolase I family. QueF type 1 subfamily.

The protein resides in the cytoplasm. The catalysed reaction is 7-aminomethyl-7-carbaguanine + 2 NADP(+) = 7-cyano-7-deazaguanine + 2 NADPH + 3 H(+). Its pathway is tRNA modification; tRNA-queuosine biosynthesis. Catalyzes the NADPH-dependent reduction of 7-cyano-7-deazaguanine (preQ0) to 7-aminomethyl-7-deazaguanine (preQ1). This chain is NADPH-dependent 7-cyano-7-deazaguanine reductase, found in Chlorobium phaeovibrioides (strain DSM 265 / 1930) (Prosthecochloris vibrioformis (strain DSM 265)).